Here is a 596-residue protein sequence, read N- to C-terminus: Chaperonin 60 subunit beta 2, chloroplastic (596 aa).

The N-terminal 50 residues, 1–50 (MASTFTATSSLGSLLAPNAIKLSSATSISSSSFGRRHNVCVRRSRPAIVC), are a transit peptide targeting the chloroplast. 2 positions are modified to phosphoserine: Ser-97 and Ser-474. Residues 388 to 489 (TQEAVNKRVV…KDTLENDEEK (102 aa)) adopt a coiled-coil conformation.

Belongs to the chaperonin (HSP60) family. Part of the Cpn60 complex composed of 7 alpha and 7 beta subunits. Can also form a complex composed of 14 beta subunits only. Both complexes show ATPase activity. The Cpn60 complex interacts with the Cpn10 complex. Interacts with RAB during heat stress.

The protein resides in the plastid. The protein localises to the chloroplast stroma. Its function is as follows. Involved in protein assisted folding. The polypeptide is Chaperonin 60 subunit beta 2, chloroplastic (CPN60B2) (Arabidopsis thaliana (Mouse-ear cress)).